We begin with the raw amino-acid sequence, 455 residues long: Probable glycine dehydrogenase (decarboxylating) subunit 1 (455 aa).

The protein belongs to the GcvP family. N-terminal subunit subfamily. As to quaternary structure, the glycine cleavage system is composed of four proteins: P, T, L and H. In this organism, the P 'protein' is a heterodimer of two subunits.

It catalyses the reaction N(6)-[(R)-lipoyl]-L-lysyl-[glycine-cleavage complex H protein] + glycine + H(+) = N(6)-[(R)-S(8)-aminomethyldihydrolipoyl]-L-lysyl-[glycine-cleavage complex H protein] + CO2. Its function is as follows. The glycine cleavage system catalyzes the degradation of glycine. The P protein binds the alpha-amino group of glycine through its pyridoxal phosphate cofactor; CO(2) is released and the remaining methylamine moiety is then transferred to the lipoamide cofactor of the H protein. This is Probable glycine dehydrogenase (decarboxylating) subunit 1 from Francisella philomiragia subsp. philomiragia (strain ATCC 25017 / CCUG 19701 / FSC 153 / O#319-036).